The following is a 201-amino-acid chain: Alpha-1-acid glycoprotein 1 (201 aa).

The signal sequence occupies residues 1–18 (MALSWVLTVLSLLPLLEA). Gln19 carries the post-translational modification Pyrrolidone carboxylic acid. Cystine bridges form between Cys23–Cys165 and Cys90–Cys183. Asn33 carries an N-linked (GlcNAc...) (complex) asparagine glycan. N-linked (GlcNAc...) asparagine glycosylation is present at Asn56. N-linked (GlcNAc...) (complex) asparagine glycosylation occurs at Asn72. Asn93 and Asn103 each carry an N-linked (GlcNAc...) asparagine glycan.

Belongs to the calycin superfamily. Lipocalin family. N-glycosylated. N-glycan heterogeneity at Asn-33: Hex5HexNAc4 (minor), Hex6HexNAc5 (major) and dHex1Hex6HexNAc5 (minor). Expressed by the liver and secreted in plasma.

It localises to the secreted. Functionally, functions as a transport protein in the blood stream. Binds various ligands in the interior of its beta-barrel domain. Also binds synthetic drugs and influences their distribution and availability in the body. Appears to function in modulating the activity of the immune system during the acute-phase reaction. This is Alpha-1-acid glycoprotein 1 (ORM1) from Homo sapiens (Human).